The chain runs to 340 residues: COP9 signalosome complex subunit 5 (340 aa).

In terms of domain architecture, MPN spans 52–189; that stretch reads VRISATALIK…IGAFRTYPAD (138 aa). The Zn(2+) site is built by His135, His137, and Asp148. Residues 135–148 carry the JAMM motif motif; sequence HSHPGYGCWLSGID.

This sequence belongs to the peptidase M67A family. CSN5 subfamily. Component of the COP9 signalosome (CSN) complex.

The protein localises to the cytoplasm. It is found in the nucleus. Catalytic Component of the COP9 signalosome (CSN) complex that acts as an regulator of the ubiquitin (Ubl) conjugation pathway by mediating the deneddylation of the cullin subunit of SCF-type E3 ubiquitin-protein ligase complexes. This Gibberella zeae (strain ATCC MYA-4620 / CBS 123657 / FGSC 9075 / NRRL 31084 / PH-1) (Wheat head blight fungus) protein is COP9 signalosome complex subunit 5 (RRI1).